Reading from the N-terminus, the 275-residue chain is Photosystem II extrinsic protein O (275 aa).

Positions 1-28 are cleaved as a signal peptide; it reads MRFRTLLIAFLALCLGLITACSEGPANA.

Belongs to the PsbO family. As to quaternary structure, PSII is composed of 1 copy each of membrane proteins PsbA, PsbB, PsbC, PsbD, PsbE, PsbF, PsbH, PsbI, PsbJ, PsbK, PsbL, PsbM, PsbT, PsbX, PsbY, PsbZ, Psb30/Ycf12, peripheral proteins PsbO, CyanoQ (PsbQ), PsbU, PsbV and a large number of cofactors. It forms dimeric complexes.

The protein resides in the cellular thylakoid membrane. Its function is as follows. One of the extrinsic, lumenal subunits of photosystem II (PSII), which stabilize and protect the oxygen-evolving complex. PSII is a light-driven water plastoquinone oxidoreductase, using light energy to abstract electrons from H(2)O, generating a proton gradient subsequently used for ATP formation. Required for dimerization of PSII and for binding of PsbQ to PSII. This chain is Photosystem II extrinsic protein O, found in Crocosphaera subtropica (strain ATCC 51142 / BH68) (Cyanothece sp. (strain ATCC 51142)).